The chain runs to 516 residues: Signal recognition particle protein (516 aa).

GTP-binding positions include 108-115 (GLQGAGKT), 191-195 (DTAGR), and 249-252 (TKID). The segment at 383–405 (MTPEERENPDLLTPSRRRRIASG) is disordered.

The protein belongs to the GTP-binding SRP family. SRP54 subfamily. Part of the signal recognition particle protein translocation system, which is composed of SRP and FtsY.

Its subcellular location is the cytoplasm. The catalysed reaction is GTP + H2O = GDP + phosphate + H(+). Its function is as follows. Involved in targeting and insertion of nascent membrane proteins into the cytoplasmic membrane. Binds to the hydrophobic signal sequence of the ribosome-nascent chain (RNC) as it emerges from the ribosomes. The SRP-RNC complex is then targeted to the cytoplasmic membrane where it interacts with the SRP receptor FtsY. This chain is Signal recognition particle protein, found in Streptococcus mutans serotype c (strain ATCC 700610 / UA159).